A 168-amino-acid chain; its full sequence is Transcription antitermination protein NusB (168 aa).

Belongs to the NusB family.

Its function is as follows. Involved in transcription antitermination. Required for transcription of ribosomal RNA (rRNA) genes. Binds specifically to the boxA antiterminator sequence of the ribosomal RNA (rrn) operons. The chain is Transcription antitermination protein NusB from Bradyrhizobium sp. (strain ORS 278).